The primary structure comprises 140 residues: MRHYEIIFLVHPDQSEQVGGMVERYTKLIEEDGGKIHRLEDWGRRQLAYAINNVHKAHYVMLNVECTGKALAELEDNFRYNDAVIRNLVIRREEAVTGQSEMLKAEENRSERRERRDRPEHEGADSADSDDSDNSDNADE.

Residues 96–140 (VTGQSEMLKAEENRSERRERRDRPEHEGADSADSDDSDNSDNADE) form a disordered region. Positions 103–124 (LKAEENRSERRERRDRPEHEGA) are enriched in basic and acidic residues. Residues 125–140 (DSADSDDSDNSDNADE) show a composition bias toward acidic residues.

Belongs to the bacterial ribosomal protein bS6 family.

Its function is as follows. Binds together with bS18 to 16S ribosomal RNA. This chain is Small ribosomal subunit protein bS6, found in Pseudomonas fluorescens (strain SBW25).